We begin with the raw amino-acid sequence, 281 residues long: Feruloyl esterase A (281 aa).

The first 21 residues, Met1 to Ala21, serve as a signal peptide directing secretion. Cystine bridges form between Cys50/Cys279, Cys112/Cys115, and Cys248/Cys255. Asp98 contributes to the substrate binding site. Residue Asn100 is glycosylated (N-linked (GlcNAc...) asparagine). Residue Tyr101 coordinates substrate. Ser154 (nucleophile) is an active-site residue. Asp215 (charge relay system) is an active-site residue. His268 contacts substrate. His268 functions as the Charge relay system in the catalytic mechanism.

Glycosylated.

The protein resides in the secreted. The enzyme catalyses feruloyl-polysaccharide + H2O = ferulate + polysaccharide.. With respect to regulation, inhibited by the specific serine esterase inhibitor diisopropylfluorophosphate. Involved in degradation of plant cell walls. Hydrolyzes the feruloyl-arabinose ester bond in arabinoxylans, and the feruloyl-galactose ester bond in pectin. Binds to cellulose. This is Feruloyl esterase A (faeA) from Aspergillus niger.